The sequence spans 157 residues: 6,7-dimethyl-8-ribityllumazine synthase (157 aa).

Residues phenylalanine 23, 57 to 59 (AFE), and 81 to 83 (AVI) contribute to the 5-amino-6-(D-ribitylamino)uracil site. 86–87 (ST) contributes to the (2S)-2-hydroxy-3-oxobutyl phosphate binding site. The Proton donor role is filled by histidine 89. Phenylalanine 114 serves as a coordination point for 5-amino-6-(D-ribitylamino)uracil. Residue arginine 128 participates in (2S)-2-hydroxy-3-oxobutyl phosphate binding.

This sequence belongs to the DMRL synthase family.

The catalysed reaction is (2S)-2-hydroxy-3-oxobutyl phosphate + 5-amino-6-(D-ribitylamino)uracil = 6,7-dimethyl-8-(1-D-ribityl)lumazine + phosphate + 2 H2O + H(+). It functions in the pathway cofactor biosynthesis; riboflavin biosynthesis; riboflavin from 2-hydroxy-3-oxobutyl phosphate and 5-amino-6-(D-ribitylamino)uracil: step 1/2. In terms of biological role, catalyzes the formation of 6,7-dimethyl-8-ribityllumazine by condensation of 5-amino-6-(D-ribitylamino)uracil with 3,4-dihydroxy-2-butanone 4-phosphate. This is the penultimate step in the biosynthesis of riboflavin. This Desulfosudis oleivorans (strain DSM 6200 / JCM 39069 / Hxd3) (Desulfococcus oleovorans) protein is 6,7-dimethyl-8-ribityllumazine synthase.